A 282-amino-acid chain; its full sequence is MKVIHTIKDLQAELTALRAQGKKVGLVPTMGALHAGHASLVKRSVSENGVTVVSVFVNPTQFNDKNDLAKYPRTLDADCRLLEDCGAAFAFAPSVEEMYPQPDTREFSYAPLDTVMEGAFRPGHFNGVCQIVSKLFDAVQPDRAYFGEKDFQQLAIIREMVRQMDYKLEIVGCPIVREEDGLALSSRNKRLSARERENALNISQTLFKSRTFAASHTVSETQKMVEEAIEDAPGLRLEYFEIVDGNTLQKVSSWEDSLYVVGCITVFCGEVRLIDNIKYKEI.

30-37 (MGALHAGH) lines the ATP pocket. Residue H37 is the Proton donor of the active site. Q61 contributes to the (R)-pantoate binding site. Residue Q61 coordinates beta-alanine. 147 to 150 (GEKD) contacts ATP. Q153 contributes to the (R)-pantoate binding site. ATP contacts are provided by residues V176 and 184 to 187 (LSSR).

This sequence belongs to the pantothenate synthetase family. As to quaternary structure, homodimer.

The protein localises to the cytoplasm. The catalysed reaction is (R)-pantoate + beta-alanine + ATP = (R)-pantothenate + AMP + diphosphate + H(+). Its pathway is cofactor biosynthesis; (R)-pantothenate biosynthesis; (R)-pantothenate from (R)-pantoate and beta-alanine: step 1/1. Its function is as follows. Catalyzes the condensation of pantoate with beta-alanine in an ATP-dependent reaction via a pantoyl-adenylate intermediate. The protein is Pantothenate synthetase of Bacteroides thetaiotaomicron (strain ATCC 29148 / DSM 2079 / JCM 5827 / CCUG 10774 / NCTC 10582 / VPI-5482 / E50).